Reading from the N-terminus, the 836-residue chain is Probable serine/threonine-protein kinase dyrk1 (836 aa).

Low complexity predominate over residues glutamine 99–glutamine 278. The segment at glutamine 99–aspartate 286 is disordered. The Protein kinase domain maps to phenylalanine 304–phenylalanine 624. ATP-binding positions include leucine 310–valine 318 and lysine 333. The active-site Proton acceptor is the aspartate 432. 3 disordered regions span residues aspartate 627–glutamine 697, threonine 718–asparagine 767, and asparagine 785–isoleucine 836. A compositionally biased stretch (low complexity) spans serine 630–glutamine 697. A compositionally biased stretch (polar residues) spans threonine 718–histidine 728. Positions lysine 729–proline 744 are enriched in basic and acidic residues. A compositionally biased stretch (low complexity) spans asparagine 785 to serine 816.

This sequence belongs to the protein kinase superfamily. CMGC Ser/Thr protein kinase family. MNB/DYRK subfamily.

It catalyses the reaction L-seryl-[protein] + ATP = O-phospho-L-seryl-[protein] + ADP + H(+). The enzyme catalyses L-threonyl-[protein] + ATP = O-phospho-L-threonyl-[protein] + ADP + H(+). It carries out the reaction L-tyrosyl-[protein] + ATP = O-phospho-L-tyrosyl-[protein] + ADP + H(+). This Dictyostelium discoideum (Social amoeba) protein is Probable serine/threonine-protein kinase dyrk1 (dyrk1).